A 501-amino-acid polypeptide reads, in one-letter code: Aluminum-activated malate transporter 2 (501 aa).

The next 6 helical transmembrane spans lie at V22–Q42, A52–G72, A78–S98, T101–V121, R130–F150, and V166–G186. The interval F398–D425 is disordered.

It belongs to the aromatic acid exporter (TC 2.A.85) family.

It is found in the membrane. Its function is as follows. Malate transporter. The sequence is that of Aluminum-activated malate transporter 2 (ALMT2) from Arabidopsis thaliana (Mouse-ear cress).